Here is a 243-residue protein sequence, read N- to C-terminus: Proteasome subunit beta (243 aa).

Residues 1 to 46 (MFNPNNGSEFARNRARLDDTPNPYEPEVGSLPEGDRSQAGSDTVNK) form a disordered region. A propeptide spans 1-48 (MFNPNNGSEFARNRARLDDTPNPYEPEVGSLPEGDRSQAGSDTVNKTG) (removed in mature form; by autocatalysis). Thr-49 (nucleophile) is an active-site residue.

The protein belongs to the peptidase T1B family. As to quaternary structure, the 20S proteasome core is composed of 14 alpha and 14 beta subunits that assemble into four stacked heptameric rings, resulting in a barrel-shaped structure. The two inner rings, each composed of seven catalytic beta subunits, are sandwiched by two outer rings, each composed of seven alpha subunits. The catalytic chamber with the active sites is on the inside of the barrel. Has a gated structure, the ends of the cylinder being occluded by the N-termini of the alpha-subunits. Is capped at one or both ends by the proteasome regulatory ATPase, PAN.

It localises to the cytoplasm. The catalysed reaction is Cleavage of peptide bonds with very broad specificity.. The formation of the proteasomal ATPase PAN-20S proteasome complex, via the docking of the C-termini of PAN into the intersubunit pockets in the alpha-rings, triggers opening of the gate for substrate entry. Interconversion between the open-gate and close-gate conformations leads to a dynamic regulation of the 20S proteasome proteolysis activity. Its function is as follows. Component of the proteasome core, a large protease complex with broad specificity involved in protein degradation. This is Proteasome subunit beta from Halobacterium salinarum (strain ATCC 29341 / DSM 671 / R1).